The sequence spans 189 residues: DnaJ homolog subfamily C member 5G (189 aa).

The J domain occupies 17–98 (SLYAVLDLKK…KKRKIYDQHG (82 aa)). The interval 154 to 189 (PEQDSGRKYQQNVQSQPPRSGAKCDFRSEENSEDDF) is disordered. Residues 161–171 (KYQQNVQSQPP) show a composition bias toward polar residues.

Post-translationally, palmitoylated. Testis specific.

The protein localises to the membrane. The sequence is that of DnaJ homolog subfamily C member 5G (DNAJC5G) from Homo sapiens (Human).